The sequence spans 1182 residues: Phosphatidylinositol 3-kinase age-1 (1182 aa).

A compositionally biased stretch (polar residues) spans 1–16 (MSMGRSPSTTFRSRTG). Positions 1–24 (MSMGRSPSTTFRSRTGSHGARDLI) are disordered. One can recognise a PI3K-ABD domain in the interval 74–174 (NEGVADIITM…FPMLFLYQPD (101 aa)). The 93-residue stretch at 266–358 (KRKAEINGVC…YRCPGFVVRR (93 aa)) folds into the PI3K-RBD domain. The 153-residue stretch at 425–577 (LDANLMIRPV…SSYGGRVRMP (153 aa)) folds into the C2 PI3K-type domain. In terms of domain architecture, PIK helical spans 601–788 (DDYESCIRDP…SLLMEAYLRG (188 aa)). The PI3K/PI4K catalytic domain maps to 853–1168 (IIDKAIVLGS…IYEEAFNGSW (316 aa)). A G-loop region spans residues 859–865 (VLGSAKR). The segment at 1028-1036 (GIKDRHSDN) is catalytic loop. The tract at residues 1047–1073 (HIDFGHILGHGKTKLGIQRDRQPFILT) is activation loop.

It belongs to the PI3/PI4-kinase family.

The enzyme catalyses a 1,2-diacyl-sn-glycero-3-phospho-(1D-myo-inositol) + ATP = a 1,2-diacyl-sn-glycero-3-phospho-(1D-myo-inositol-3-phosphate) + ADP + H(+). Phosphatidylinositol 3-kinase homolog that regulates longevity and diapause. Promotes cell survival during embryonic development by recruiting akt-1/2 to the plasma membrane through the production of PtdIns(3,4,5)P3. Could function in the development or neuroendocrine signaling of the dauer pathway. Mediates susceptibility to enteropathogenic E.coli infection. May negatively regulate AYI interneuron neurite outgrowth. Plays a role in aversive olfactory learning when an odor is associated with food deprivation. Regulates this process by promoting the nuclear relocalization of egl-4 in AWC olfactory neurons after odor conditioning. This Caenorhabditis elegans protein is Phosphatidylinositol 3-kinase age-1.